A 182-amino-acid polypeptide reads, in one-letter code: Protein Syd (182 aa).

The protein belongs to the Syd family.

It is found in the cell inner membrane. Interacts with the SecY protein in vivo. May bind preferentially to an uncomplexed state of SecY, thus functioning either as a chelating agent for excess SecY in the cell or as a regulatory factor that negatively controls the translocase function. The polypeptide is Protein Syd (Aeromonas salmonicida (strain A449)).